The primary structure comprises 370 residues: Flagellar P-ring protein (370 aa).

The first 21 residues, M1–A21, serve as a signal peptide directing secretion.

Belongs to the FlgI family. As to quaternary structure, the basal body constitutes a major portion of the flagellar organelle and consists of four rings (L,P,S, and M) mounted on a central rod.

It localises to the periplasm. The protein resides in the bacterial flagellum basal body. Functionally, assembles around the rod to form the L-ring and probably protects the motor/basal body from shearing forces during rotation. This is Flagellar P-ring protein from Pseudoalteromonas atlantica (strain T6c / ATCC BAA-1087).